The following is a 181-amino-acid chain: Oligoribonuclease (181 aa).

Positions 8 to 171 constitute an Exonuclease domain; the sequence is LIWVDLEMTG…DDIRESIAEL (164 aa). Tyr-129 is a catalytic residue.

It belongs to the oligoribonuclease family.

It localises to the cytoplasm. In terms of biological role, 3'-to-5' exoribonuclease specific for small oligoribonucleotides. This Aliivibrio fischeri (strain ATCC 700601 / ES114) (Vibrio fischeri) protein is Oligoribonuclease.